Here is a 91-residue protein sequence, read N- to C-terminus: Large ribosomal subunit protein eL34 (91 aa).

A disordered region spans residues 48 to 71; sequence RGRPVEMRKLPKTKKRPERPYPHL.

This sequence belongs to the eukaryotic ribosomal protein eL34 family.

This is Large ribosomal subunit protein eL34 (rpl34e) from Pyrococcus abyssi (strain GE5 / Orsay).